The following is a 446-amino-acid chain: Exodeoxyribonuclease 7 large subunit (446 aa).

This sequence belongs to the XseA family. Heterooligomer composed of large and small subunits.

It localises to the cytoplasm. It catalyses the reaction Exonucleolytic cleavage in either 5'- to 3'- or 3'- to 5'-direction to yield nucleoside 5'-phosphates.. Its function is as follows. Bidirectionally degrades single-stranded DNA into large acid-insoluble oligonucleotides, which are then degraded further into small acid-soluble oligonucleotides. The sequence is that of Exodeoxyribonuclease 7 large subunit from Streptococcus pyogenes serotype M3 (strain ATCC BAA-595 / MGAS315).